The primary structure comprises 749 residues: MSSDTSDTRPPHSDSGTQSNSESENPIIDSPEPKAHAPLTNKDWWPEQVDVSVLHKQNDKGNPLGEDFNYAEAFAQLDLEAFKRDVIEVIQTSQDWWPADYGNYAGLFIRMSWHAAGTYRIFDGRGGAGQGSQRFAPLNSWPDNANLDKARRLLWPIKQKYGNKISWADLIAYAGNAALEQSGFKTAGFAFGREDIWEPEEMLWGQEDTWLGTDKRYGGTNEDKRELAEPFGATTMGLIYVNPEGPEGKPDPLAAAHDIRETFGRMAMNDEETAALIVGGHTLGKTHGAADVNVGPEPEGAPIEEQGLGWKCPFGTGNANDTVTSGLEVIWTGTNSEWSNRYLEILYGNEWELTKSPAGAWQFEAKNAEATIPDPFGGPPRKPTMLVTDVSMREDPIYGQITRRWLDHPEEMDEAFAKAWYKLMHRDMGPISRYLGPWVAEPEIWQDPVPDVDHELVDESDIASLKSKVLESGLTVQQLVKTAWASASSFRGTDKRGGANGARVRLEPQRSWEGNEPAELAKVLPTLEQIQQDFNASASGGKKISLADLIVLAGSAAVEKAAKDAGYEIDVHFAPGRTDASQEQTDVESFAVLETKADGFRNYIRPGQKTSVEKLLVEKAYLLDLTAPEMTALLGGLRVLNVNHGGSKHGVFTNSPGALSNDFFVNLLDMNTAWKPSENTENVFEGRDRATGEIKWTATANDLVFGSNSVLRGIAEVYAQDDSKDKFVEDFVAAWVKVMNNDRFDLEKF.

Residues 1-12 are compositionally biased toward basic and acidic residues; that stretch reads MSSDTSDTRPPH. The tract at residues 1–40 is disordered; it reads MSSDTSDTRPPHSDSGTQSNSESENPIIDSPEPKAHAPLT. Over residues 14–24 the composition is skewed to polar residues; that stretch reads DSGTQSNSESE. Positions 113–240 form a cross-link, tryptophyl-tyrosyl-methioninium (Trp-Tyr) (with M-266); the sequence is WHAAGTYRIF…FGATTMGLIY (128 aa). The Proton acceptor role is filled by histidine 114. Positions 240–266 form a cross-link, tryptophyl-tyrosyl-methioninium (Tyr-Met) (with W-113); that stretch reads YVNPEGPEGKPDPLAAAHDIRETFGRM. Residue histidine 281 participates in heme b binding.

The protein belongs to the peroxidase family. Peroxidase/catalase subfamily. Homodimer or homotetramer. Requires heme b as cofactor. In terms of processing, formation of the three residue Trp-Tyr-Met cross-link is important for the catalase, but not the peroxidase activity of the enzyme.

The catalysed reaction is H2O2 + AH2 = A + 2 H2O. It catalyses the reaction 2 H2O2 = O2 + 2 H2O. In terms of biological role, bifunctional enzyme with both catalase and broad-spectrum peroxidase activity. The protein is Catalase-peroxidase of Mycobacterium sp. (strain JLS).